We begin with the raw amino-acid sequence, 409 residues long: MIKINEHFLKLQSSYLFSEIAKRVNAHQATHPDQSIIKLGIGDATQPLCPACLDAFHKAVDEMGTASSFRGYGPEQGYAFLREAVAANDYQARGADIQPDEVFISDGAKCDTGNFQELFATDIRVAIPDPVYPVYLDTNVMAGRTGAFENGRYGNIVYMECTAQNSFLPAIPKEPADLVYLCFPNNPTGAVATKEYLQAWVDWALDAKALILFDAAYEAFIRDPSIPKTIYEIPGARKVAVEFRSFSKTAGFTGTRCAFSVVPKECMAYDTSGKAHALHALWNRRHCTKFNGVSYPVQRAAEAVYSPEGKAQAKEMIRTYMANADRITAAMAGMGFSYVGGDHSPYIWVDTKTDSWAFFDTLLTKAGVVCTPGGGFGKCGAQYIRLSAFNSYANVDAAMKRMAEVFGKA.

2 residues coordinate substrate: Tyr15 and Gly42. Residues Tyr72, 108-109 (AK), Tyr132, Asn186, Tyr217, and 245-247 (SFS) each bind pyridoxal 5'-phosphate. Positions 109, 132, and 186 each coordinate substrate. Residue Lys248 is modified to N6-(pyridoxal phosphate)lysine. Pyridoxal 5'-phosphate contacts are provided by Arg256 and Asn291. The substrate site is built by Asn291 and Arg385.

Belongs to the class-I pyridoxal-phosphate-dependent aminotransferase family. LL-diaminopimelate aminotransferase subfamily. As to quaternary structure, homodimer. The cofactor is pyridoxal 5'-phosphate.

The catalysed reaction is (2S,6S)-2,6-diaminopimelate + 2-oxoglutarate = (S)-2,3,4,5-tetrahydrodipicolinate + L-glutamate + H2O + H(+). It participates in amino-acid biosynthesis; L-lysine biosynthesis via DAP pathway; LL-2,6-diaminopimelate from (S)-tetrahydrodipicolinate (aminotransferase route): step 1/1. Its function is as follows. Involved in the synthesis of meso-diaminopimelate (m-DAP or DL-DAP), required for both lysine and peptidoglycan biosynthesis. Catalyzes the direct conversion of tetrahydrodipicolinate to LL-diaminopimelate. In Desulfosudis oleivorans (strain DSM 6200 / JCM 39069 / Hxd3) (Desulfococcus oleovorans), this protein is LL-diaminopimelate aminotransferase.